A 408-amino-acid polypeptide reads, in one-letter code: Glutamate N-acetyltransferase (408 aa).

T150, K176, T189, E271, N403, and T408 together coordinate substrate. Residue T189 is the Nucleophile of the active site.

Belongs to the ArgJ family. As to quaternary structure, heterotetramer of two alpha and two beta chains.

Its subcellular location is the cytoplasm. The catalysed reaction is N(2)-acetyl-L-ornithine + L-glutamate = N-acetyl-L-glutamate + L-ornithine. It participates in amino-acid biosynthesis; L-arginine biosynthesis; L-ornithine and N-acetyl-L-glutamate from L-glutamate and N(2)-acetyl-L-ornithine (cyclic): step 1/1. In terms of biological role, catalyzes the transfer of the acetyl group from N(2)-acetylornithine to glutamate, forming N-acetylglutamate and L-ornithine. This chain is Glutamate N-acetyltransferase, found in Methanococcus maripaludis (strain C6 / ATCC BAA-1332).